The primary structure comprises 307 residues: Putative lipid kinase SE_0507 (307 aa).

Positions 3–139 (QPYNHGVLFY…YDVLKVNDLY (137 aa)) constitute a DAGKc domain. Residues S44, 74-80 (GDGTLNE), and T101 each bind ATP. Residues S220, D223, and R225 each coordinate Mg(2+). E281 (proton acceptor) is an active-site residue.

Belongs to the diacylglycerol/lipid kinase family. Mg(2+) serves as cofactor.

In terms of biological role, may catalyze the ATP-dependent phosphorylation of lipids other than diacylglycerol (DAG). The polypeptide is Putative lipid kinase SE_0507 (Staphylococcus epidermidis (strain ATCC 12228 / FDA PCI 1200)).